Here is a 363-residue protein sequence, read N- to C-terminus: Pyrimidine monooxygenase RutA (363 aa).

FMN-binding positions include 49–50 (IK), N115, E124, 140–141 (RY), and S190.

It belongs to the NtaA/SnaA/DszA monooxygenase family. RutA subfamily.

The catalysed reaction is uracil + FMNH2 + NADH + O2 = (Z)-3-ureidoacrylate + FMN + NAD(+) + H2O + H(+). It catalyses the reaction thymine + FMNH2 + NADH + O2 = (Z)-2-methylureidoacrylate + FMN + NAD(+) + H2O + H(+). Catalyzes the pyrimidine ring opening between N-3 and C-4 by an unusual flavin hydroperoxide-catalyzed mechanism, adding oxygen atoms in the process to yield ureidoacrylate peracid, that immediately reacts with FMN forming ureidoacrylate and FMN-N(5)-oxide. The FMN-N(5)-oxide reacts spontaneously with NADH to produce FMN. Requires the flavin reductase RutF to regenerate FMN in vivo. This chain is Pyrimidine monooxygenase RutA, found in Klebsiella pneumoniae (strain 342).